A 706-amino-acid chain; its full sequence is ABC transporter D family member 2, chloroplastic (706 aa).

The N-terminal 44 residues, 1–44, are a transit peptide targeting the chloroplast; that stretch reads MILMITAPVCPPHLLLRHSSLLRHESSIGNFHRKKNPRFRTVSC. Ser45 is modified (N-acetylserine). A run of 5 helical transmembrane segments spans residues 88 to 108, 124 to 144, 200 to 222, 237 to 257, and 326 to 346; these read LAAV…FNFL, FTKQ…FFVL, TALS…SNIL, SFGG…LNFL, and ILPV…FGVI. The ABC transmembrane type-1 domain maps to 88 to 372; sequence LAAVFALTLA…VVYQFQAISS (285 aa). Residues 430–697 enclose the ABC transporter domain; it reads LEIEELTLQT…DAQDSLYGRL (268 aa). 464 to 471 provides a ligand contact to ATP; that stretch reads GPSGSGKT. Positions 545 to 569 are disordered; sequence TTPGGSNIDGSPPLLIREDGNEKPT. The segment covering 560-569 has biased composition (basic and acidic residues); the sequence is IREDGNEKPT.

This sequence belongs to the ABC transporter superfamily. ABCD family. Peroxisomal fatty acyl CoA transporter (TC 3.A.1.203) subfamily. In terms of assembly, homodimer or heterodimer.

Its subcellular location is the membrane. The protein localises to the plastid. The protein resides in the chloroplast. In Arabidopsis thaliana (Mouse-ear cress), this protein is ABC transporter D family member 2, chloroplastic (ABCC2).